The chain runs to 370 residues: Probable aspartic-type endopeptidase ARB_04018 (370 aa).

A signal peptide spans 1 to 21 (MWHSPFSTAFTLFLGFFTLTL). Asn-80 and Asn-102 each carry an N-linked (GlcNAc...) asparagine glycan. One can recognise a Peptidase A1 domain in the interval 94–367 (FVNEITIGND…DHDGPKMGFA (274 aa)). Asp-110 is an active-site residue. The N-linked (GlcNAc...) asparagine glycan is linked to Asn-251. Residue Asp-261 is part of the active site. N-linked (GlcNAc...) asparagine glycosylation occurs at Asn-298.

The protein belongs to the peptidase A1 family.

The protein resides in the secreted. In terms of biological role, probable aspartic-type endopeptidase which contributes to virulence. This is Probable aspartic-type endopeptidase ARB_04018 from Arthroderma benhamiae (strain ATCC MYA-4681 / CBS 112371) (Trichophyton mentagrophytes).